Here is a 474-residue protein sequence, read N- to C-terminus: SHC-transforming protein 3 (474 aa).

Residues 1–27 (MSATRKSRAGDEPLPRPPRGAPHTSDQ) form a disordered region. The PID domain maps to 29–214 (LGPGVTYVVK…LDEPWTEEEG (186 aa)). Residues 215 to 378 (DGPDHPYYNS…RMLEELNAEP (164 aa)) are CH1. Serine 282 bears the Phosphoserine mark. Residues 308–328 (QPVPPQVWPAATSSTESSPRK) form a disordered region. The SH2 domain occupies 379-470 (WYQGEMSRKE…GSELCLQQPV (92 aa)).

Interacts with the Trk receptors in a phosphotyrosine-dependent manner. Once activated, binds to GRB2. Interacts with activated EGF receptors. Tyrosine phosphorylated. As to expression, predominantly expressed in the adult brain.

Functionally, signaling adapter that couples activated growth factor receptors to signaling pathway in neurons. Involved in the signal transduction pathways of neurotrophin-activated Trk receptors in cortical neurons. This Mus musculus (Mouse) protein is SHC-transforming protein 3 (Shc3).